Reading from the N-terminus, the 384-residue chain is DNA dC-&gt;dU-editing enzyme APOBEC-3G (384 aa).

The segment at 1–60 is essential for cytoplasmic localization; it reads MKPHFRNTVERMYRDTFSYNFYNRPILSRRNTVWLCYEVKTKGPSRPPLDAKIFRGQVYS. The 110-residue stretch at 29-138 folds into the CMP/dCMP-type deaminase 1 domain; sequence RRNTVWLCYE…PDYQEALRSL (110 aa). Threonine 32 is subject to Phosphothreonine; by PKA. Residues lysine 42, lysine 52, and lysine 63 each participate in a (Microbial infection) Glycyl lysine isopeptide (Lys-Gly) (interchain with G-Cter in ubiquitin) cross-link. Zn(2+)-binding residues include histidine 65, cysteine 97, and cysteine 100. (Microbial infection) Glycyl lysine isopeptide (Lys-Gly) (interchain with G-Cter in ubiquitin) cross-links involve residues lysine 150 and lysine 163. Residues 209–336 are necessary for homooligomerization; the sequence is EPWVRGRHET…TLAEAGAKIS (128 aa). The tract at residues 213 to 215 is interaction with DNA; that stretch reads RGR. In terms of domain architecture, CMP/dCMP-type deaminase 2 spans 214–328; that stretch reads GRHETYLCYE…GRCQEGLRTL (115 aa). Threonine 218 is modified (phosphothreonine; by PKA and CAMK2). A (Microbial infection) Glycyl lysine isopeptide (Lys-Gly) (interchain with G-Cter in ubiquitin) cross-link involves residue lysine 249. Zn(2+) is bound at residue histidine 257. Glutamate 259 acts as the Proton donor in catalysis. A (Microbial infection) Glycyl lysine isopeptide (Lys-Gly) (interchain with G-Cter in ubiquitin) cross-link involves residue lysine 270. Cysteine 288 and cysteine 291 together coordinate Zn(2+). (Microbial infection) Glycyl lysine isopeptide (Lys-Gly) (interchain with G-Cter in ubiquitin) cross-links involve residues lysine 297, lysine 301, and lysine 303. The interaction with DNA stretch occupies residues 313–320; the sequence is RIYDDQGR. Residue lysine 334 forms a (Microbial infection) Glycyl lysine isopeptide (Lys-Gly) (interchain with G-Cter in ubiquitin) linkage.

The protein belongs to the cytidine and deoxycytidylate deaminase family. As to quaternary structure, homodimer. Homooligomer. Can bind RNA to form ribonucleoprotein complexes of high-molecular-mass (HMM) or low-molecular-mass (LMM). HMM is inactive and heterogeneous in protein composition because of binding nonselectively to cellular RNAs, which in turn are associated with variety of cellular proteins. The LMM form which is enzymatically active has few or no RNAs associated. Its ability to form homooligomer is distinct from its ability to assemble into HMM. Interacts with APOBEC3B, APOBEC3F, MOV10, AGO2, EIF4E, EIF4ENIF1, DCP2 and DDX6 in an RNA-dependent manner. Interacts with AGO1, AGO3 and PKA/PRKACA. In terms of assembly, (Microbial infection) Interacts with HIV-1 Vif; promoting its ubiquitination by a cullin-5-RING E3 ubiquitin-protein ligase complex (ECS complex) hijacked by the HIV-1 Vif. (Microbial infection) Interacts with HIV-1 reverse transcriptase/ribonuclease H. As to quaternary structure, (Microbial infection) Interacts with hepatitis B virus capsid protein. Zn(2+) serves as cofactor. (Microbial infection) Following infection by HIV-1, ubiquitinated by a cullin-5-RING E3 ubiquitin-protein ligase complex (ECS complex) hijacked by the HIV-1 Vif protein, leading to its degradation. Deubiquitinated by USP49; leading to stabilization. In terms of processing, phosphorylation at Thr-32 reduces its binding to HIV-1 Vif and subsequent ubiquitination and degradation thus promoting its antiviral activity. Expressed in spleen, testes, ovary and peripheral blood leukocytes and CD4+ lymphocytes. Also expressed in non-permissive peripheral blood mononuclear cells, and several tumor cell lines; no expression detected in permissive lymphoid and non-lymphoid cell lines. Exists only in the LMM form in peripheral blood-derived resting CD4 T-cells and monocytes, both of which are refractory to HIV-1 infection. LMM is converted to a HMM complex when resting CD4 T-cells are activated or when monocytes are induced to differentiate into macrophages. This change correlates with increased susceptibility of these cells to HIV-1 infection.

It localises to the cytoplasm. It is found in the nucleus. Its subcellular location is the P-body. The enzyme catalyses a 2'-deoxycytidine in single-stranded DNA + H2O + H(+) = a 2'-deoxyuridine in single-stranded DNA + NH4(+). With respect to regulation, (Microbial infection) Antiviral activity is neutralized by the HIV-1 virion infectivity factor (Vif), that prevents its incorporation into progeny virions by both inhibiting its translation and/or by inducing its ubiquitination and subsequent degradation by the 26S proteasome. Can also be neutralized by simian immunodeficiency virus sooty mangabey monkey virus (SIV-sm) and chimpanzee immunodeficiency virus (SIV-cpz) Vif. Its function is as follows. DNA deaminase (cytidine deaminase) which acts as an inhibitor of retrovirus replication and retrotransposon mobility via deaminase-dependent and -independent mechanisms. Exhibits potent antiviral activity against Vif-deficient HIV-1. After the penetration of retroviral nucleocapsids into target cells of infection and the initiation of reverse transcription, it can induce the conversion of cytosine to uracil in the minus-sense single-strand viral DNA, leading to G-to-A hypermutations in the subsequent plus-strand viral DNA. The resultant detrimental levels of mutations in the proviral genome, along with a deamination-independent mechanism that works prior to the proviral integration, together exert efficient antiretroviral effects in infected target cells. Selectively targets single-stranded DNA and does not deaminate double-stranded DNA or single- or double-stranded RNA. Exhibits antiviral activity also against simian immunodeficiency viruses (SIVs), hepatitis B virus (HBV), equine infectious anemia virus (EIAV), xenotropic MuLV-related virus (XMRV) and simian foamy virus (SFV). May inhibit the mobility of LTR and non-LTR retrotransposons. This is DNA dC-&gt;dU-editing enzyme APOBEC-3G from Homo sapiens (Human).